The primary structure comprises 101 residues: MSHDHNHDHEERELITLVDEQGNETLFEILLTIDGKEEFGKNYVLLVPVNAEEDEDGQVEIQAYSFIENEDGTEGELQPIPEDSEDEWNMIEEVFNSFMEE.

This sequence belongs to the UPF0473 family.

The sequence is that of UPF0473 protein spr0177 from Streptococcus pneumoniae (strain ATCC BAA-255 / R6).